The chain runs to 222 residues: RNA-binding protein KhpB (222 aa).

Residues 2-51 (DMVTVTAKTVEEAVTKALIELQTTSDKLTYEIVEKGSAGFLGIGSKPAII) form a jag_N domain region. The KH domain maps to 54-133 (KRKETLQDKA…KSSSDYIRVK (80 aa)). Residues 138 to 204 (NYRERRKETL…EEPFRHVIIS (67 aa)) form the R3H domain.

Belongs to the KhpB RNA-binding protein family. As to quaternary structure, forms a complex with KhpA. Homodimer or homotrimer.

The protein resides in the cytoplasm. In terms of biological role, a probable RNA chaperone. Forms a complex with KhpA which binds to cellular RNA and controls its expression. Plays a role in peptidoglycan (PG) homeostasis and cell length regulation. This is RNA-binding protein KhpB from Clostridium symbiosum (Bacteroides symbiosus).